The primary structure comprises 453 residues: Allantoinase (453 aa).

Residues H59, H61, K146, H186, H242, and D315 each contribute to the Zn(2+) site. Position 146 is an N6-carboxylysine (K146).

Belongs to the metallo-dependent hydrolases superfamily. Allantoinase family. Homotetramer. The cofactor is Zn(2+). In terms of processing, carboxylation allows a single lysine to coordinate two zinc ions.

It carries out the reaction (S)-allantoin + H2O = allantoate + H(+). It participates in nitrogen metabolism; (S)-allantoin degradation; allantoate from (S)-allantoin: step 1/1. In terms of biological role, catalyzes the conversion of allantoin (5-ureidohydantoin) to allantoic acid by hydrolytic cleavage of the five-member hydantoin ring. This chain is Allantoinase, found in Escherichia coli (strain K12 / MC4100 / BW2952).